A 226-amino-acid chain; its full sequence is ATP synthase F(0) complex subunit a (226 aa).

The next 6 helical transmembrane spans lie at 11–31, 68–88, 97–117, 138–158, 164–184, and 194–214; these read APTI…TLLI, WSLM…LGLL, QLSM…ITGL, IPML…ALAV, ITAG…LSTI, and VLLM…AYVF.

Belongs to the ATPase A chain family. In terms of assembly, component of the ATP synthase complex composed at least of ATP5F1A/subunit alpha, ATP5F1B/subunit beta, ATP5MC1/subunit c (homooctomer), MT-ATP6/subunit a, MT-ATP8/subunit 8, ATP5ME/subunit e, ATP5MF/subunit f, ATP5MG/subunit g, ATP5MK/subunit k, ATP5MJ/subunit j, ATP5F1C/subunit gamma, ATP5F1D/subunit delta, ATP5F1E/subunit epsilon, ATP5PF/subunit F6, ATP5PB/subunit b, ATP5PD/subunit d, ATP5PO/subunit OSCP. ATP synthase complex consists of a soluble F(1) head domain (subunits alpha(3) and beta(3)) - the catalytic core - and a membrane F(0) domain - the membrane proton channel (subunits c, a, 8, e, f, g, k and j). These two domains are linked by a central stalk (subunits gamma, delta, and epsilon) rotating inside the F1 region and a stationary peripheral stalk (subunits F6, b, d, and OSCP). Interacts with DNAJC30; interaction is direct.

It localises to the mitochondrion inner membrane. It carries out the reaction H(+)(in) = H(+)(out). Functionally, subunit a, of the mitochondrial membrane ATP synthase complex (F(1)F(0) ATP synthase or Complex V) that produces ATP from ADP in the presence of a proton gradient across the membrane which is generated by electron transport complexes of the respiratory chain. ATP synthase complex consist of a soluble F(1) head domain - the catalytic core - and a membrane F(1) domain - the membrane proton channel. These two domains are linked by a central stalk rotating inside the F(1) region and a stationary peripheral stalk. During catalysis, ATP synthesis in the catalytic domain of F(1) is coupled via a rotary mechanism of the central stalk subunits to proton translocation. With the subunit c (ATP5MC1), forms the proton-conducting channel in the F(0) domain, that contains two crucial half-channels (inlet and outlet) that facilitate proton movement from the mitochondrial intermembrane space (IMS) into the matrix. Protons are taken up via the inlet half-channel and released through the outlet half-channel, following a Grotthuss mechanism. The protein is ATP synthase F(0) complex subunit a of Papio hamadryas (Hamadryas baboon).